Consider the following 443-residue polypeptide: Glutamate--tRNA ligase 1 (443 aa).

The 'HIGH' region motif lies at 7–17 (PSPTGYLHVGN). The 'KMSKS' region signature appears at 236 to 240 (KISKR). Lysine 239 provides a ligand contact to ATP.

It belongs to the class-I aminoacyl-tRNA synthetase family. Glutamate--tRNA ligase type 1 subfamily. As to quaternary structure, monomer.

It is found in the cytoplasm. It catalyses the reaction tRNA(Glu) + L-glutamate + ATP = L-glutamyl-tRNA(Glu) + AMP + diphosphate. Its function is as follows. Catalyzes the attachment of glutamate to tRNA(Glu) in a two-step reaction: glutamate is first activated by ATP to form Glu-AMP and then transferred to the acceptor end of tRNA(Glu). The sequence is that of Glutamate--tRNA ligase 1 from Ehrlichia chaffeensis (strain ATCC CRL-10679 / Arkansas).